Consider the following 397-residue polypeptide: Acetate kinase (397 aa).

Position 8 (Asn8) interacts with Mg(2+). Residue Lys15 coordinates ATP. A substrate-binding site is contributed by Arg90. Asp147 serves as the catalytic Proton donor/acceptor. ATP contacts are provided by residues 207 to 211 (HLGAG), 283 to 285 (DMR), and 330 to 334 (GVGEN). Glu383 contributes to the Mg(2+) binding site.

It belongs to the acetokinase family. Homodimer. Requires Mg(2+) as cofactor. It depends on Mn(2+) as a cofactor.

It localises to the cytoplasm. The catalysed reaction is acetate + ATP = acetyl phosphate + ADP. The protein operates within metabolic intermediate biosynthesis; acetyl-CoA biosynthesis; acetyl-CoA from acetate: step 1/2. Catalyzes the formation of acetyl phosphate from acetate and ATP. Can also catalyze the reverse reaction. This chain is Acetate kinase, found in Fructilactobacillus sanfranciscensis (Lactobacillus sanfranciscensis).